A 410-amino-acid polypeptide reads, in one-letter code: Kelch domain-containing protein 10 (410 aa).

A disordered region spans residues 1-40 (MSAAQGWDRNRRRGGGAAGGASGVSGAGAAGGGRGTGQLN). Position 13 is an omega-N-methylarginine (Arg-13). The segment covering 15–36 (GGAAGGASGVSGAGAAGGGRGT) has biased composition (gly residues). Kelch repeat units follow at residues 87 to 154 (GPDN…DVHV), 155 to 198 (CNVK…GYIY), 199 to 260 (STDL…IHAY), 261 to 319 (NLET…LQTF), 320 to 364 (QWVK…GSLF), and 365 to 403 (KIWL…GLTQ). Residues 369–410 (VVPSLLELAWEKLLAAFPNLANLSRTQLLHLGLTQELIERLK) are interaction with CUL2.

Belongs to the KLHDC10 family. As to quaternary structure, component of a CRL2 E3 ubiquitin-protein ligase complex, also named ECS (Elongin BC-CUL2/5-SOCS-box protein) complex, composed of CUL2, Elongin BC (ELOB and ELOC), RBX1 and substrate-specific adapter KLHDC10. Interacts (via the 6 Kelch repeats) with PPP5C.

It localises to the nucleus. The protein resides in the cytoplasm. It participates in protein modification; protein ubiquitination. In terms of biological role, substrate-recognition component of a Cul2-RING (CRL2) E3 ubiquitin-protein ligase complex of the DesCEND (destruction via C-end degrons) pathway, which recognizes a C-degron located at the extreme C-terminus of target proteins, leading to their ubiquitination and degradation. The C-degron recognized by the DesCEND pathway is usually a motif of less than ten residues and can be present in full-length proteins, truncated proteins or proteolytically cleaved forms. The CRL2(KLHDC10) complex specifically recognizes proteins with a proline-glycine (Pro-Gly) or an alanine tail (CAT tail) at the C-terminus, leading to their ubiquitination and degradation. The CRL2(KLHDC10) complex is involved in the ribosome-associated quality control (RQC) pathway, which mediates the extraction of incompletely synthesized nascent chains from stalled ribosomes: CRL2(KLHDC10) acts downstream of NEMF and recognizes CAT tails associated with stalled nascent chains, leading to their ubiquitination and degradation. Participates in the oxidative stress-induced cell death through MAP3K5 activation. Inhibits PPP5C phosphatase activity on MAP3K5. Acts as a regulator of necroptosis. The polypeptide is Kelch domain-containing protein 10 (Rattus norvegicus (Rat)).